The primary structure comprises 426 residues: Glutamate-1-semialdehyde 2,1-aminomutase (426 aa).

Lys265 carries the N6-(pyridoxal phosphate)lysine modification.

Belongs to the class-III pyridoxal-phosphate-dependent aminotransferase family. HemL subfamily. Homodimer. Pyridoxal 5'-phosphate is required as a cofactor.

It is found in the cytoplasm. It catalyses the reaction (S)-4-amino-5-oxopentanoate = 5-aminolevulinate. It functions in the pathway porphyrin-containing compound metabolism; protoporphyrin-IX biosynthesis; 5-aminolevulinate from L-glutamyl-tRNA(Glu): step 2/2. The polypeptide is Glutamate-1-semialdehyde 2,1-aminomutase (Alteromonas mediterranea (strain DSM 17117 / CIP 110805 / LMG 28347 / Deep ecotype)).